A 119-amino-acid chain; its full sequence is MFSLKRQQGASFEHQARLFLESKGLTFIAANQNFKCGELDLIMNDKETIVFVEVRQRSHSAYGSAIESVDWRKQQKWLDAANLWLAKQNMSLEDANCRFDLIAFGKTPQDIQWIPNFLD.

The protein belongs to the UPF0102 family.

This is UPF0102 protein CGSHiGG_01960 from Haemophilus influenzae (strain PittGG).